The sequence spans 995 residues: Polynucleotide 5'-hydroxyl-kinase NOL9 (995 aa).

Disordered stretches follow at residues 18 to 173 (EQRE…SSMK) and 271 to 359 (IKVF…YEPP). 2 stretches are compositionally biased toward low complexity: residues 75 to 94 (TAGAKRPLSNNVSNPDSSPS) and 110 to 129 (VNKSSNVAAKKSAATSKSAK). The span at 279 to 354 (EETDSDEDDI…DIFDTDDLDS (76 aa)) shows a compositional bias: acidic residues. Position 639-646 (639-646 (GGKGVGKS)) interacts with ATP.

It belongs to the Clp1 family. NOL9/GRC3 subfamily.

It is found in the nucleus. It localises to the nucleolus. Functionally, polynucleotide 5'-kinase involved in rRNA processing. The sequence is that of Polynucleotide 5'-hydroxyl-kinase NOL9 from Drosophila melanogaster (Fruit fly).